The sequence spans 364 residues: G-protein coupled receptor 4 (364 aa).

At methionine 1–serine 8 the chain is on the extracellular side. A glycan (N-linked (GlcNAc...) asparagine) is linked at asparagine 3. The chain crosses the membrane as a helical span at residues cysteine 9–glutamine 45. Disulfide bonds link cysteine 9–cysteine 258 and cysteine 90–cysteine 168. The Cytoplasmic segment spans residues valine 46 to lysine 49. A helical transmembrane segment spans residues asparagine 50–glutamine 80. Topologically, residues aspartate 81–histidine 85 are extracellular. Residues glycine 86 to histidine 121 form a helical membrane-spanning segment. Residues proline 122–arginine 129 lie on the Cytoplasmic side of the membrane. A helical membrane pass occupies residues arginine 130 to asparagine 156. The Extracellular portion of the chain corresponds to glutamate 157–tyrosine 172. The segment at glutamate 157–tyrosine 172 is extracellular loop 2 (ECL2). Residue asparagine 164 is glycosylated (N-linked (GlcNAc...) asparagine). A helical membrane pass occupies residues proline 173 to threonine 210. Over asparagine 211–threonine 214 the chain is Cytoplasmic. A helical transmembrane segment spans residues glutamate 215–valine 250. The Extracellular segment spans residues tyrosine 251–phenylalanine 260. Residues glutamate 261–alanine 289 traverse the membrane as a helical segment. The Cytoplasmic portion of the chain corresponds to asparagine 290–cysteine 364.

This sequence belongs to the G-protein coupled receptor 1 family.

The protein resides in the cell membrane. Activated by a network of residues that connects an extracellular-facing cavity to Glu-145, a conserved charged residue buried in the transmembrane core of the receptor. Protonation likely drives conformational changes in extracellular loop 2 (ECL2), which stabilizes movement of transmembrane 3 (TM3) and a series of rearrangements that connect the extracellular-facing cavity to Glu-145, a residue only conserved in proton-sensing G-protein coupled receptors. In terms of biological role, proton-sensing G-protein coupled receptor activated by extracellular pH, which is required to monitor pH changes and generate adaptive reactions. Ligand binding causes a conformation change that triggers signaling via guanine nucleotide-binding proteins (G proteins) and modulates the activity of downstream effectors, such as adenylate cyclase. The protein is G-protein coupled receptor 4 of Callorhinchus milii (Ghost shark).